We begin with the raw amino-acid sequence, 172 residues long: UPF0254 protein Mlab_1743 (172 aa).

The protein belongs to the UPF0254 family.

In Methanocorpusculum labreanum (strain ATCC 43576 / DSM 4855 / Z), this protein is UPF0254 protein Mlab_1743.